The sequence spans 361 residues: Tyrosine--tRNA ligase (361 aa).

Residues Y36, Y162, Q166, D169, and Q184 each contribute to the L-tyrosine site. The 'KMSKS' region signature appears at 235–239; it reads KMSKS. K238 is an ATP binding site.

This sequence belongs to the class-I aminoacyl-tRNA synthetase family. TyrS type 4 subfamily. Homodimer.

It is found in the cytoplasm. The catalysed reaction is tRNA(Tyr) + L-tyrosine + ATP = L-tyrosyl-tRNA(Tyr) + AMP + diphosphate + H(+). Its function is as follows. Catalyzes the attachment of tyrosine to tRNA(Tyr) in a two-step reaction: tyrosine is first activated by ATP to form Tyr-AMP and then transferred to the acceptor end of tRNA(Tyr). The protein is Tyrosine--tRNA ligase of Sulfolobus acidocaldarius (strain ATCC 33909 / DSM 639 / JCM 8929 / NBRC 15157 / NCIMB 11770).